Here is a 571-residue protein sequence, read N- to C-terminus: Urease subunit alpha (571 aa).

The Urease domain occupies 134-571 (GAIDTHIHFI…LPMAQRYFLF (438 aa)). Residues histidine 139, histidine 141, and lysine 222 each coordinate Ni(2+). N6-carboxylysine is present on lysine 222. Histidine 224 contacts substrate. Ni(2+) is bound by residues histidine 251 and histidine 277. Histidine 325 serves as the catalytic Proton donor. Aspartate 365 provides a ligand contact to Ni(2+).

This sequence belongs to the metallo-dependent hydrolases superfamily. Urease alpha subunit family. In terms of assembly, heterotrimer of UreA (gamma), UreB (beta) and UreC (alpha) subunits. Three heterotrimers associate to form the active enzyme. Requires Ni cation as cofactor. Carboxylation allows a single lysine to coordinate two nickel ions.

Its subcellular location is the cytoplasm. The catalysed reaction is urea + 2 H2O + H(+) = hydrogencarbonate + 2 NH4(+). It functions in the pathway nitrogen metabolism; urea degradation; CO(2) and NH(3) from urea (urease route): step 1/1. The protein is Urease subunit alpha of Bordetella pertussis (strain Tohama I / ATCC BAA-589 / NCTC 13251).